A 628-amino-acid chain; its full sequence is MALVSTAPLASKSCLHKSLISSTHELKALSRTIPALGMSRRGKSITPSISMSSTTVVTDDGVRRRMGDFHSNLWDDDVIQSLPTAYEEKSYLERAEKLIGEVKNMFNSMSLEDGELMSPLNDLIQRLWIVDSLERLGIHRHFKDEIKSALDYVYSYWGENGIGCGRESVVTDLNSTALGLRTLRLHGYPVSSDVFKAFKGQNGQFSCSENIQTDEEIRGVLNLFRASLIAFPGEKIMDEAEIFSTKYLKEALQKIPVSSLSREIGDVLEYGWHTYLPRLEARNYIQVFGQDTENTKSYVKSKKLLELAKLEFNIFQSLQKRELESLVRWWKESGFPEMTFCRHRHVEYYTLASCIAFEPQHSGFRLGFAKTCHLITVLDDMYDTFGTVDELELFTATMKRWDPSSIDCLPEYMKGVYIAVYDTVNEMAREAEEAQGRDTLTYAREAWEAYIDSYMQEARWIATGYLPSFDEYYENGKVSCGHRISALQPILTMDIPFPDHILKEVDFPSKLNDLACAILRLRGDTRCYKADRARGEEASSISCYMKDNPGVSEEDALDHINAMISDVIKGLNWELLKPDINVPISAKKHAFDIARAFHYGYKYRDGYSVANVETKSLVTRTLLESVPL.

The transit peptide at 1–36 (MALVSTAPLASKSCLHKSLISSTHELKALSRTIPAL) directs the protein to the chloroplast. The Mg(2+) site is built by aspartate 379, aspartate 383, and aspartate 531. Positions 379–383 (DDMYD) match the DDXXD motif motif.

Belongs to the terpene synthase family. Tpsd subfamily. The cofactor is Mg(2+). Requires Mn(2+) as cofactor. K(+) serves as cofactor.

The protein resides in the plastid. It localises to the chloroplast. The catalysed reaction is (2E)-geranyl diphosphate = (1S,5S)-alpha-pinene + diphosphate. It catalyses the reaction (2E)-geranyl diphosphate = (1S,5S)-beta-pinene + diphosphate. Its pathway is terpene metabolism; oleoresin biosynthesis. In terms of biological role, involved in defensive oleoresin formation in conifers in response to insect attack or other injury. Involved in monoterpene (C10) olefins biosynthesis. A mixture of alpha- and beta-pinene is produced by this enzyme. The sequence is that of Pinene synthase, chloroplastic (ag3) from Abies grandis (Grand fir).